The following is a 25-amino-acid chain: KAKCAEIDQDCKTSCDCCKGACTCY.

Intrachain disulfides connect cysteine 4-cysteine 18 and cysteine 11-cysteine 22.

In terms of assembly, monomer. In terms of tissue distribution, expressed by the venom gland.

The protein localises to the secreted. Its function is as follows. Neurotoxin. The protein is U11-ctenitoxin-Co1b of Ctenus ornatus (Brazilian spider).